Here is a 193-residue protein sequence, read N- to C-terminus: Holliday junction branch migration complex subunit RuvA (193 aa).

Residues 1-63 form a domain I region; the sequence is MYAYLKGKIM…EDAQLLYGFK (63 aa). Positions 64 to 141 are domain II; it reads DEEEKAMFNA…TITDESELFK (78 aa). Residues 141 to 142 form a flexible linker region; that stretch reads KE. A domain III region spans residues 143-193; it reads VNDTLLNEALLAFEALGYSKREITKIEKELKKKQFSTVDEYVKQGLQMFVS.

Belongs to the RuvA family. Homotetramer. Forms an RuvA(8)-RuvB(12)-Holliday junction (HJ) complex. HJ DNA is sandwiched between 2 RuvA tetramers; dsDNA enters through RuvA and exits via RuvB. An RuvB hexamer assembles on each DNA strand where it exits the tetramer. Each RuvB hexamer is contacted by two RuvA subunits (via domain III) on 2 adjacent RuvB subunits; this complex drives branch migration. In the full resolvosome a probable DNA-RuvA(4)-RuvB(12)-RuvC(2) complex forms which resolves the HJ.

It localises to the cytoplasm. Its function is as follows. The RuvA-RuvB-RuvC complex processes Holliday junction (HJ) DNA during genetic recombination and DNA repair, while the RuvA-RuvB complex plays an important role in the rescue of blocked DNA replication forks via replication fork reversal (RFR). RuvA specifically binds to HJ cruciform DNA, conferring on it an open structure. The RuvB hexamer acts as an ATP-dependent pump, pulling dsDNA into and through the RuvAB complex. HJ branch migration allows RuvC to scan DNA until it finds its consensus sequence, where it cleaves and resolves the cruciform DNA. This chain is Holliday junction branch migration complex subunit RuvA, found in Macrococcus caseolyticus (strain JCSC5402) (Macrococcoides caseolyticum).